The sequence spans 107 residues: Anti-adapter protein IraM (107 aa).

Belongs to the IraM/RssC family.

It is found in the cytoplasm. Inhibits RpoS proteolysis by regulating RssB activity, thereby increasing the stability of the sigma stress factor RpoS during magnesium starvation. The polypeptide is Anti-adapter protein IraM (Escherichia coli (strain 55989 / EAEC)).